The following is a 112-amino-acid chain: Nitrogen regulatory protein P-II (112 aa).

Residue Tyr51 is modified to O-UMP-tyrosine.

It belongs to the P(II) protein family. Homotrimer.

Its function is as follows. P-II indirectly controls the transcription of the glutamine synthetase gene (glnA). P-II prevents NR-II-catalyzed conversion of NR-I to NR-I-phosphate, the transcriptional activator of glnA. When P-II is uridylylated to P-II-UMP, these events are reversed. When the ratio of Gln to 2-ketoglutarate decreases, P-II is uridylylated to P-II-UMP, which causes the deadenylation of glutamine synthetase, so activating the enzyme. The chain is Nitrogen regulatory protein P-II (glnB) from Rhodobacter capsulatus (Rhodopseudomonas capsulata).